A 1169-amino-acid chain; its full sequence is Pesticidal crystal protein Cry1Fb (1169 aa).

Belongs to the delta endotoxin family.

Functionally, promotes colloidosmotic lysis by binding to the midgut epithelial cells of insects. This is Pesticidal crystal protein Cry1Fb (cry1Fb) from Bacillus thuringiensis subsp. morrisoni.